Consider the following 225-residue polypeptide: Phosphoribosylformylglycinamidine synthase subunit PurQ (225 aa).

The Glutamine amidotransferase type-1 domain occupies 4-225; the sequence is RIGVITFPGT…LSVLDTLVTA (222 aa). The active-site Nucleophile is the Cys87. Residues His196 and Glu198 contribute to the active site.

Part of the FGAM synthase complex composed of 1 PurL, 1 PurQ and 2 PurS subunits.

The protein resides in the cytoplasm. The enzyme catalyses N(2)-formyl-N(1)-(5-phospho-beta-D-ribosyl)glycinamide + L-glutamine + ATP + H2O = 2-formamido-N(1)-(5-O-phospho-beta-D-ribosyl)acetamidine + L-glutamate + ADP + phosphate + H(+). The catalysed reaction is L-glutamine + H2O = L-glutamate + NH4(+). Its pathway is purine metabolism; IMP biosynthesis via de novo pathway; 5-amino-1-(5-phospho-D-ribosyl)imidazole from N(2)-formyl-N(1)-(5-phospho-D-ribosyl)glycinamide: step 1/2. Part of the phosphoribosylformylglycinamidine synthase complex involved in the purines biosynthetic pathway. Catalyzes the ATP-dependent conversion of formylglycinamide ribonucleotide (FGAR) and glutamine to yield formylglycinamidine ribonucleotide (FGAM) and glutamate. The FGAM synthase complex is composed of three subunits. PurQ produces an ammonia molecule by converting glutamine to glutamate. PurL transfers the ammonia molecule to FGAR to form FGAM in an ATP-dependent manner. PurS interacts with PurQ and PurL and is thought to assist in the transfer of the ammonia molecule from PurQ to PurL. The protein is Phosphoribosylformylglycinamidine synthase subunit PurQ of Nocardia farcinica (strain IFM 10152).